The sequence spans 306 residues: Putative dihydroorotate dehydrogenase A (fumarate) (306 aa).

Residues S20 and 44–45 (KG) each bind FMN. Substrate contacts are provided by residues K44 and 68–72 (NSIGL). Residues N98 and N126 each contribute to the FMN site. N126 is a binding site for substrate. The Nucleophile role is filled by C129. FMN-binding residues include K164 and I190. 191–192 (NT) contacts substrate. FMN is bound by residues G216, 244-245 (GG), and 266-267 (GT).

It belongs to the dihydroorotate dehydrogenase family. Type 1 subfamily. As to quaternary structure, homodimer. The cofactor is FMN.

Its subcellular location is the cytoplasm. The enzyme catalyses (S)-dihydroorotate + fumarate = orotate + succinate. Its pathway is pyrimidine metabolism; UMP biosynthesis via de novo pathway. Its function is as follows. Catalyzes the conversion of dihydroorotate to orotate with fumarate as the electron acceptor. This chain is Putative dihydroorotate dehydrogenase A (fumarate) (pyrD), found in Aquifex aeolicus (strain VF5).